Reading from the N-terminus, the 204-residue chain is Small ribosomal subunit protein uS4 (204 aa).

Residues 22 to 43 (SGKELARRPYAPGDHGNTGRRP) are disordered. An S4 RNA-binding domain is found at 94-154 (TRLDSVVFRL…ERSKKIVPIL (61 aa)).

It belongs to the universal ribosomal protein uS4 family. In terms of assembly, part of the 30S ribosomal subunit. Contacts protein S5. The interaction surface between S4 and S5 is involved in control of translational fidelity.

Functionally, one of the primary rRNA binding proteins, it binds directly to 16S rRNA where it nucleates assembly of the body of the 30S subunit. With S5 and S12 plays an important role in translational accuracy. The sequence is that of Small ribosomal subunit protein uS4 from Oenococcus oeni (strain ATCC BAA-331 / PSU-1).